The primary structure comprises 469 residues: UDP-glycosyltransferase 75B1 (469 aa).

The active-site Proton acceptor is histidine 16. An an anthocyanidin-binding site is contributed by histidine 16. UDP-alpha-D-glucose is bound by residues glutamine 334, histidine 349, tryptophan 352, serine 354, glutamate 357, aspartate 373, and glutamine 374.

This sequence belongs to the UDP-glycosyltransferase family. Interacts with CALS1, ROP1 and phragmoplastin.

The protein resides in the cytoplasm. The protein localises to the perinuclear region. It is found in the cytoskeleton. Its subcellular location is the phragmoplast. It catalyses the reaction (indol-3-yl)acetate + UDP-alpha-D-glucose = 1-O-(indol-3-ylacetyl)-beta-D-glucose + UDP. The protein operates within plant hormone metabolism; auxin conjugation. Its function is as follows. Possesses low catalytic activity on indole-3-acetic acid (IAA) in vitro. May transfer UDP-glucose from sucrose synthase to callose synthase for the synthesis of callose at the forming cell plate during cytokinesis. Has high affinity for 4-aminobenzoate. Catalyzes the formation of 4-aminobenzoate glucose ester which represents a storage form of 4-aminobenzoate in the vacuole. Is the major source of this activity in the plant. Also active in vitro on benzoates and benzoate derivatives. The protein is UDP-glycosyltransferase 75B1 (UGT75B1) of Arabidopsis thaliana (Mouse-ear cress).